The chain runs to 524 residues: Coatomer subunit delta-1 (524 aa).

A disordered region spans residues 215 to 244 (MDMDSFASKPKGGRPSAAATAPGKGLGMKL). The MHD domain occupies 283-524 (SDPVTVTIEE…RLVAANYQVV (242 aa)).

It belongs to the adaptor complexes medium subunit family. Delta-COP subfamily. As to quaternary structure, oligomeric complex that consists of at least the alpha, beta, beta', gamma, delta, epsilon and zeta subunits.

It localises to the cytoplasm. It is found in the golgi apparatus membrane. The protein localises to the cytoplasmic vesicle. Its subcellular location is the COPI-coated vesicle membrane. The coatomer is a cytosolic protein complex that binds to dilysine motifs and reversibly associates with Golgi non-clathrin-coated vesicles, which further mediate biosynthetic protein transport from the ER, via the Golgi up to the trans Golgi network. Coatomer complex is required for budding from Golgi membranes, and is essential for the retrograde Golgi-to-ER transport of dilysine-tagged proteins. This is Coatomer subunit delta-1 from Oryza sativa subsp. japonica (Rice).